Here is a 629-residue protein sequence, read N- to C-terminus: tRNA uridine 5-carboxymethylaminomethyl modification enzyme MnmG (629 aa).

Residues 13-18 (GGGHAG), valine 125, and serine 180 contribute to the FAD site. 273 to 287 (GPRYCPSIEDKVMRF) contacts NAD(+). FAD is bound at residue glutamine 370.

Belongs to the MnmG family. As to quaternary structure, homodimer. Heterotetramer of two MnmE and two MnmG subunits. FAD is required as a cofactor.

It is found in the cytoplasm. Functionally, NAD-binding protein involved in the addition of a carboxymethylaminomethyl (cmnm) group at the wobble position (U34) of certain tRNAs, forming tRNA-cmnm(5)s(2)U34. The protein is tRNA uridine 5-carboxymethylaminomethyl modification enzyme MnmG of Escherichia coli O127:H6 (strain E2348/69 / EPEC).